A 193-amino-acid chain; its full sequence is Ribose 1,5-bisphosphate phosphokinase PhnN (193 aa).

ATP is bound at residue 9-16 (GPSGAGKD).

It belongs to the ribose 1,5-bisphosphokinase family.

It carries out the reaction alpha-D-ribose 1,5-bisphosphate + ATP = 5-phospho-alpha-D-ribose 1-diphosphate + ADP. It functions in the pathway metabolic intermediate biosynthesis; 5-phospho-alpha-D-ribose 1-diphosphate biosynthesis; 5-phospho-alpha-D-ribose 1-diphosphate from D-ribose 5-phosphate (route II): step 3/3. Its function is as follows. Catalyzes the phosphorylation of ribose 1,5-bisphosphate to 5-phospho-D-ribosyl alpha-1-diphosphate (PRPP). This chain is Ribose 1,5-bisphosphate phosphokinase PhnN, found in Yersinia pestis.